Here is a 334-residue protein sequence, read N- to C-terminus: Syntaxin-18 (334 aa).

The Cytoplasmic portion of the chain corresponds to 1–308; the sequence is MAVDITLLFR…EDIREAIKNN (308 aa). Disordered stretches follow at residues 29 to 50 and 166 to 225; these read GGADGSRDELFRRSPRPKGDFS and LSKL…GEDE. 2 stretches are compositionally biased toward basic and acidic residues: residues 33–50 and 166–182; these read GSRDELFRRSPRPKGDFS and LSKLEPEPHTKRKDSTS. Over residues 183–192 the composition is skewed to polar residues; the sequence is EKAPQNASQD. The segment covering 193–207 has biased composition (basic and acidic residues); that stretch reads SEGKPAAEELPEKPL. Residues 242 to 304 form the t-SNARE coiled-coil homology domain; the sequence is IGEMNSLFDE…KEGNEDIREA (63 aa). The helical; Anchor for type IV membrane protein transmembrane segment at 309-329 threads the bilayer; the sequence is AGFRVWILFFLVMCSFSLLFL. Topologically, residues 330-334 are lumenal; it reads DWYDS.

The protein belongs to the syntaxin family. As to quaternary structure, component of a SNARE complex consisting of STX18, USE1L, BNIP1/SEC20L, and SEC22B. RINT1/TIP20L and ZW10 are associated with the complex through interaction with BNIP1/SEC20L. Interacts directly with USE1L and BNIP1/SEC20L.

Its subcellular location is the endoplasmic reticulum membrane. The protein resides in the golgi apparatus membrane. Functionally, syntaxin that may be involved in targeting and fusion of Golgi-derived retrograde transport vesicles with the ER. The chain is Syntaxin-18 (Stx18) from Mus musculus (Mouse).